The following is a 612-amino-acid chain: DNA mismatch repair protein MutL (612 aa).

The protein belongs to the DNA mismatch repair MutL/HexB family.

Its function is as follows. This protein is involved in the repair of mismatches in DNA. It is required for dam-dependent methyl-directed DNA mismatch repair. May act as a 'molecular matchmaker', a protein that promotes the formation of a stable complex between two or more DNA-binding proteins in an ATP-dependent manner without itself being part of a final effector complex. This chain is DNA mismatch repair protein MutL, found in Afipia carboxidovorans (strain ATCC 49405 / DSM 1227 / KCTC 32145 / OM5) (Oligotropha carboxidovorans).